Reading from the N-terminus, the 102-residue chain is Small ribosomal subunit protein uS10 (102 aa).

Belongs to the universal ribosomal protein uS10 family. Part of the 30S ribosomal subunit.

Involved in the binding of tRNA to the ribosomes. The sequence is that of Small ribosomal subunit protein uS10 from Clavibacter michiganensis subsp. michiganensis (strain NCPPB 382).